The following is a 216-amino-acid chain: Sperm microtubule inner protein 8 (216 aa).

In terms of assembly, microtubule inner protein component of sperm flagellar doublet microtubules. In terms of tissue distribution, expressed in sperm.

The protein localises to the cytoplasm. It localises to the cytoskeleton. It is found in the flagellum axoneme. In terms of biological role, microtubule inner protein (MIP) part of the dynein-decorated doublet microtubules (DMTs) in flagellum axoneme. May serve to reinforce and thus stabilize the microtubule structure in the sperm flagella. This is Sperm microtubule inner protein 8 (SPMIP8) from Bos taurus (Bovine).